We begin with the raw amino-acid sequence, 447 residues long: Serine/threonine-protein kinase NLK2 (447 aa).

The Protein kinase domain maps to 60–349; that stretch reads PEPDRPIGYG…AKDALAHPYL (290 aa). Residues 66-74 and lysine 89 contribute to the ATP site; that span reads IGYGAFGVV. Aspartate 186 serves as the catalytic Proton acceptor.

This sequence belongs to the protein kinase superfamily. CMGC Ser/Thr protein kinase family. MAP kinase subfamily. As to quaternary structure, interacts with sox11, hmgxb4/hmg2l1, rnf138/narf, stat3.1 and mef2a. The cofactor is Mg(2+). Expressed widely in the ectoderm during early gastrula stage when neural induction is taking place. Expressed in the head region of neurula stage embryos. At the end of neurulation, expression becomes localized to the nervous system, and is restricted to the central nervous system, eye and head neural crest cells by the early tadpole stages.

It is found in the nucleus. Its subcellular location is the cytoplasm. It carries out the reaction L-seryl-[protein] + ATP = O-phospho-L-seryl-[protein] + ADP + H(+). The enzyme catalyses L-threonyl-[protein] + ATP = O-phospho-L-threonyl-[protein] + ADP + H(+). Activated by tyrosine and threonine phosphorylation. In terms of biological role, negatively regulates Wnt/beta-catenin-signaling during development. Plays a role together with sox11 in neural induction during early embryogenesis. Involved in TGFbeta-mediated mesoderm induction in early embryos, acting downstream of map3k7/tak1 to phosphorylate stat3.1. Augments the rnf138/narf-directed ubiquitination and degradation of tcf/lef by enhancing the association of rnf138/narf and tcf/lef. Phosphorylates mef2a to play a role in anterior neural development, including eye formation. This chain is Serine/threonine-protein kinase NLK2 (nlk.2), found in Xenopus laevis (African clawed frog).